The primary structure comprises 448 residues: 4-hydroxybenzoate transporter PcaK (448 aa).

Residues 1-30 are Cytoplasmic-facing; it reads MNQAQNSVGKSLDVQSFINQQPLSRYQWRV. Residues 31–51 traverse the membrane as a helical segment; the sequence is VLLCFLIVFLDGLDTAAMGFI. Residues 52 to 67 lie on the Periplasmic side of the membrane; the sequence is APALSQEWGIDRASLG. The chain crosses the membrane as a helical span at residues 68-88; the sequence is PVMSAALIGMVFGALGSGPLA. The Cytoplasmic segment spans residues 89 to 94; the sequence is DRFGRK. Residues 95 to 115 traverse the membrane as a helical segment; the sequence is GVLVGAVLVFGGFSLASAYAT. At 116 to 119 the chain is on the periplasmic side; the sequence is NVDQ. A helical membrane pass occupies residues 120–140; sequence LLVLRFLTGLGLGAGMPNATT. Over 141–152 the chain is Cytoplasmic; that stretch reads LLSEYTPERLKS. The chain crosses the membrane as a helical span at residues 153–173; the sequence is LLVTSMFCGFNLGMAGGGFIS. At 174–184 the chain is on the periplasmic side; that stretch reads AKMIPAYGWHS. A helical transmembrane segment spans residues 185–205; that stretch reads LLVIGGVLPLLLALVLMVWLP. Residues 206-261 lie on the Cytoplasmic side of the membrane; it reads ESARFLVVRNRGTDKIRKTLSPIAPQVVAEAGSFSVPEQKAVAARSVFAVIFSGTY. A helical membrane pass occupies residues 262–282; sequence GLGTMLLWLTYFMGLVIVYLL. The Periplasmic segment spans residues 283 to 301; the sequence is TSWLPTLMRDSGASMEQAA. The chain crosses the membrane as a helical span at residues 302-322; it reads FIGALFQFGGVLSAVGVGWAM. Over 323–329 the chain is Cytoplasmic; that stretch reads DRYNPHK. The chain crosses the membrane as a helical span at residues 330 to 350; sequence VIGIFYLLAGVFAYAVGQSLG. Position 351 (N351) is a topological domain, periplasmic. A helical transmembrane segment spans residues 352–372; the sequence is ITVLATLVLIAGMCVNGAQSA. Residues 373–398 lie on the Cytoplasmic side of the membrane; the sequence is MPSLAARFYPTQGRATGVSWMLGIGR. Residues 399–419 form a helical membrane-spanning segment; that stretch reads FGAILGAWSGATLLGLGWNFE. Residues 420–421 are Periplasmic-facing; sequence QV. The chain crosses the membrane as a helical span at residues 422–442; the sequence is LTALLVPAALATVGVIVKGLV. Residues 443–448 lie on the Cytoplasmic side of the membrane; sequence SHADAT.

Belongs to the major facilitator superfamily. Aromatic acid:H(+) symporter (AAHS) (TC 2.A.1.15) family.

It is found in the cell inner membrane. Functionally, transports 4-hydroxybenzoate (4-HBA) and protocatechuate across the membrane. Driven by the proton motive force. Also functions as a chemoreceptor, which is required for chemotaxis to aromatic acids. This Pseudomonas putida (Arthrobacter siderocapsulatus) protein is 4-hydroxybenzoate transporter PcaK (pcaK).